Here is a 361-residue protein sequence, read N- to C-terminus: Dual specificity mitogen-activated protein kinase kinase 6 (361 aa).

Basic and acidic residues-rich tracts occupy residues 1-11 (MEGGSDKESKV) and 37-48 (PKELKLPKEVFE). Positions 1–61 (MEGGSDKESK…PAPTPPRDLD (61 aa)) are disordered. Residues 30 to 46 (VRGKKKLPKELKLPKEV) are d domain. In terms of domain architecture, Protein kinase spans 80-341 (LEQIGELGRG…YTELMQHPFF (262 aa)). ATP contacts are provided by residues 86–94 (LGRGAYGVV) and Lys109. The active-site Proton acceptor is Asp206. Ser234 carries the phosphoserine; by MAPK3 modification. Position 238 is a phosphothreonine; by MAPK3 (Thr238). Positions 338 to 361 (HPFFTLHDSKDTDVASFVKTILGD) are DVD domain.

Belongs to the protein kinase superfamily. STE Ser/Thr protein kinase family. MAP kinase kinase subfamily. In terms of assembly, dimer. Interacts (via its D domain) with its MAP kinase substrates. Interacts (via its DVD domain) with MAP3Ks activators. Post-translationally, weakly autophosphorylated. Phosphorylated at Ser-234 and Thr-238 by the majority of M3Ks.

It is found in the nucleus. Its subcellular location is the cytoplasm. It localises to the cytoskeleton. The catalysed reaction is L-seryl-[protein] + ATP = O-phospho-L-seryl-[protein] + ADP + H(+). It carries out the reaction L-threonyl-[protein] + ATP = O-phospho-L-threonyl-[protein] + ADP + H(+). It catalyses the reaction L-tyrosyl-[protein] + ATP = O-phospho-L-tyrosyl-[protein] + ADP + H(+). With respect to regulation, activated by dual phosphorylation on Ser-234 and Thr-238 in response to a variety of cellular stresses, including UV radiation, osmotic shock, hypoxia, inflammatory cytokines, interferon gamma (IFNG), and less often by growth factors. MAP2K6/MKK6 is activated by the majority of M3Ks. Dual specificity protein kinase which acts as an essential component of the MAP kinase signal transduction pathway. Catalyzes the concomitant phosphorylation of a threonine and a tyrosine residue in the MAP kinases p38 and plays an important role in the regulation of cellular responses to cytokines and all kinds of stresses. The p38 MAP kinase signal transduction pathway leads to direct activation of transcription factors. Phosphorylation by MAP2K6 asymmetrically activates p38 on one side of the blastodisc, an event which is necessary for blastomere cleavage. The protein is Dual specificity mitogen-activated protein kinase kinase 6 of Danio rerio (Zebrafish).